A 180-amino-acid polypeptide reads, in one-letter code: Acireductone dioxygenase (180 aa).

His-97, His-99, Glu-103, and His-141 together coordinate Fe(2+). Positions 97, 99, 103, and 141 each coordinate Ni(2+).

This sequence belongs to the acireductone dioxygenase (ARD) family. Monomer. Requires Fe(2+) as cofactor. The cofactor is Ni(2+).

The catalysed reaction is 1,2-dihydroxy-5-(methylsulfanyl)pent-1-en-3-one + O2 = 3-(methylsulfanyl)propanoate + CO + formate + 2 H(+). It carries out the reaction 1,2-dihydroxy-5-(methylsulfanyl)pent-1-en-3-one + O2 = 4-methylsulfanyl-2-oxobutanoate + formate + 2 H(+). It participates in amino-acid biosynthesis; L-methionine biosynthesis via salvage pathway; L-methionine from S-methyl-5-thio-alpha-D-ribose 1-phosphate: step 5/6. In terms of biological role, catalyzes 2 different reactions between oxygen and the acireductone 1,2-dihydroxy-3-keto-5-methylthiopentene (DHK-MTPene) depending upon the metal bound in the active site. Fe-containing acireductone dioxygenase (Fe-ARD) produces formate and 2-keto-4-methylthiobutyrate (KMTB), the alpha-ketoacid precursor of methionine in the methionine recycle pathway. Ni-containing acireductone dioxygenase (Ni-ARD) produces methylthiopropionate, carbon monoxide and formate, and does not lie on the methionine recycle pathway. This chain is Acireductone dioxygenase, found in Acidiphilium cryptum (strain JF-5).